Reading from the N-terminus, the 511-residue chain is Lysine--tRNA ligase 2 (511 aa).

A compositionally biased stretch (polar residues) spans 1–11; it reads MTMEINNTDPS. The interval 1–21 is disordered; sequence MTMEINNTDPSENMPLPDDVD. Positions 421 and 428 each coordinate Mg(2+).

This sequence belongs to the class-II aminoacyl-tRNA synthetase family. In terms of assembly, homodimer. Mg(2+) serves as cofactor.

The protein localises to the cytoplasm. The enzyme catalyses tRNA(Lys) + L-lysine + ATP = L-lysyl-tRNA(Lys) + AMP + diphosphate. The chain is Lysine--tRNA ligase 2 from Methanosarcina acetivorans (strain ATCC 35395 / DSM 2834 / JCM 12185 / C2A).